The following is a 493-amino-acid chain: Ketol-acid reductoisomerase (NADP(+)) (493 aa).

In terms of domain architecture, KARI N-terminal Rossmann spans 17 to 208 (LGKCRFMKRE…GGDRAGVLES (192 aa)). Residues 45–48 (CGAQ), Arg68, Arg76, Ser78, and 108–110 (DKQ) contribute to the NADP(+) site. The active site involves His132. Gly158 is a binding site for NADP(+). 2 consecutive KARI C-terminal knotted domains span residues 209–353 (SFIA…SEQE) and 354–486 (YYDK…MTDM). Positions 217, 221, 389, and 393 each coordinate Mg(2+). Ser414 lines the substrate pocket.

Belongs to the ketol-acid reductoisomerase family. It depends on Mg(2+) as a cofactor.

The enzyme catalyses (2R)-2,3-dihydroxy-3-methylbutanoate + NADP(+) = (2S)-2-acetolactate + NADPH + H(+). It catalyses the reaction (2R,3R)-2,3-dihydroxy-3-methylpentanoate + NADP(+) = (S)-2-ethyl-2-hydroxy-3-oxobutanoate + NADPH + H(+). It functions in the pathway amino-acid biosynthesis; L-isoleucine biosynthesis; L-isoleucine from 2-oxobutanoate: step 2/4. The protein operates within amino-acid biosynthesis; L-valine biosynthesis; L-valine from pyruvate: step 2/4. Involved in the biosynthesis of branched-chain amino acids (BCAA). Catalyzes an alkyl-migration followed by a ketol-acid reduction of (S)-2-acetolactate (S2AL) to yield (R)-2,3-dihydroxy-isovalerate. In the isomerase reaction, S2AL is rearranged via a Mg-dependent methyl migration to produce 3-hydroxy-3-methyl-2-ketobutyrate (HMKB). In the reductase reaction, this 2-ketoacid undergoes a metal-dependent reduction by NADPH to yield (R)-2,3-dihydroxy-isovalerate. This chain is Ketol-acid reductoisomerase (NADP(+)), found in Colwellia psychrerythraea (strain 34H / ATCC BAA-681) (Vibrio psychroerythus).